Consider the following 1073-residue polypeptide: Probable inorganic carbon transporter subunit DabA 2 (1073 aa).

A compositionally biased stretch (polar residues) spans 1–20; that stretch reads MSSGNTSSQNHSPVNNQPTR. The interval 1–35 is disordered; the sequence is MSSGNTSSQNHSPVNNQPTRLKSPLPALHKDTQPN. Positions 535, 537, 721, and 736 each coordinate Zn(2+).

Belongs to the inorganic carbon transporter (TC 9.A.2) DabA family. In terms of assembly, forms a complex with DabB. Zn(2+) is required as a cofactor.

It localises to the cell inner membrane. Functionally, part of an energy-coupled inorganic carbon pump. This chain is Probable inorganic carbon transporter subunit DabA 2, found in Rhodopirellula baltica (strain DSM 10527 / NCIMB 13988 / SH1).